The sequence spans 93 residues: Pyrimidine/purine nucleoside phosphorylase (93 aa).

Belongs to the nucleoside phosphorylase PpnP family.

The catalysed reaction is a purine D-ribonucleoside + phosphate = a purine nucleobase + alpha-D-ribose 1-phosphate. It catalyses the reaction adenosine + phosphate = alpha-D-ribose 1-phosphate + adenine. It carries out the reaction cytidine + phosphate = cytosine + alpha-D-ribose 1-phosphate. The enzyme catalyses guanosine + phosphate = alpha-D-ribose 1-phosphate + guanine. The catalysed reaction is inosine + phosphate = alpha-D-ribose 1-phosphate + hypoxanthine. It catalyses the reaction thymidine + phosphate = 2-deoxy-alpha-D-ribose 1-phosphate + thymine. It carries out the reaction uridine + phosphate = alpha-D-ribose 1-phosphate + uracil. The enzyme catalyses xanthosine + phosphate = alpha-D-ribose 1-phosphate + xanthine. Functionally, catalyzes the phosphorolysis of diverse nucleosides, yielding D-ribose 1-phosphate and the respective free bases. Can use uridine, adenosine, guanosine, cytidine, thymidine, inosine and xanthosine as substrates. Also catalyzes the reverse reactions. The sequence is that of Pyrimidine/purine nucleoside phosphorylase from Cellvibrio japonicus (strain Ueda107) (Pseudomonas fluorescens subsp. cellulosa).